Reading from the N-terminus, the 403-residue chain is Betaine--homocysteine S-methyltransferase 1 (403 aa).

The Hcy-binding domain occupies 8 to 311 (KGLLERLDAG…YHTRAIAEEL (304 aa)). 3 residues coordinate Zn(2+): Cys-214, Cys-296, and Cys-297.

As to quaternary structure, homotetramer. Zn(2+) is required as a cofactor.

Its subcellular location is the cytoplasm. It catalyses the reaction L-homocysteine + glycine betaine = N,N-dimethylglycine + L-methionine. Its pathway is amine and polyamine degradation; betaine degradation; sarcosine from betaine: step 1/2. The protein operates within amino-acid biosynthesis; L-methionine biosynthesis via de novo pathway; L-methionine from L-homocysteine (BhmT route): step 1/1. Its function is as follows. Involved in the regulation of homocysteine metabolism. Converts betaine and homocysteine to dimethylglycine and methionine, respectively. This reaction is also required for the irreversible oxidation of choline. This is Betaine--homocysteine S-methyltransferase 1 (bhmt) from Xenopus tropicalis (Western clawed frog).